The primary structure comprises 306 residues: Protein pxr1 (306 aa).

Residues 1–11 (MGLAAPRKRTK) show a composition bias toward basic residues. Disordered regions lie at residues 1-27 (MGLAAPRKRTKISHDPNNTNWSRSTSG) and 148-241 (AQKE…SDIP). Polar residues predominate over residues 15–27 (DPNNTNWSRSTSG). Residues 25–79 (TSGYGHKIMSSQGWTPGSFLGARNAAHADMFTAASASHIRVVVKDDTLGLGARSK) form the G-patch domain. The span at 182–191 (NTLKALREEQ) shows a compositional bias: basic and acidic residues. The span at 219 to 228 (KKERKTKKRK) shows a compositional bias: basic residues.

It belongs to the PINX1 family.

The protein localises to the nucleus. It is found in the nucleolus. Its function is as follows. Involved in rRNA-processing at A0, A1 and A2 sites and negatively regulates telomerase. The sequence is that of Protein pxr1 (pxr1) from Aspergillus oryzae (strain ATCC 42149 / RIB 40) (Yellow koji mold).